The following is a 343-amino-acid chain: Protein RecA (343 aa).

An ATP-binding site is contributed by 65 to 72 (GPESSGKT).

This sequence belongs to the RecA family.

The protein localises to the cytoplasm. Its function is as follows. Can catalyze the hydrolysis of ATP in the presence of single-stranded DNA, the ATP-dependent uptake of single-stranded DNA by duplex DNA, and the ATP-dependent hybridization of homologous single-stranded DNAs. It interacts with LexA causing its activation and leading to its autocatalytic cleavage. This chain is Protein RecA, found in Campylobacter jejuni subsp. jejuni serotype O:6 (strain 81116 / NCTC 11828).